The chain runs to 205 residues: GTP cyclohydrolase 1 (205 aa).

Positions 94, 97, and 165 each coordinate Zn(2+).

This sequence belongs to the GTP cyclohydrolase I family. In terms of assembly, toroid-shaped homodecamer, composed of two pentamers of five dimers.

The enzyme catalyses GTP + H2O = 7,8-dihydroneopterin 3'-triphosphate + formate + H(+). It participates in cofactor biosynthesis; 7,8-dihydroneopterin triphosphate biosynthesis; 7,8-dihydroneopterin triphosphate from GTP: step 1/1. The polypeptide is GTP cyclohydrolase 1 (Sinorhizobium medicae (strain WSM419) (Ensifer medicae)).